Reading from the N-terminus, the 662-residue chain is Methionine--tRNA ligase (662 aa).

The short motif at 14–24 is the 'HIGH' region element; sequence YYPSGKLHLGS. The 'KMSKS' region signature appears at 308-312; it reads KMSKS. Residue Lys-311 participates in ATP binding. The tRNA-binding domain maps to 559-662; the sequence is DFEKIELKVA…DDVPAGSLIG (104 aa).

The protein belongs to the class-I aminoacyl-tRNA synthetase family. MetG type 2B subfamily. Homodimer.

It localises to the cytoplasm. The enzyme catalyses tRNA(Met) + L-methionine + ATP = L-methionyl-tRNA(Met) + AMP + diphosphate. Its function is as follows. Is required not only for elongation of protein synthesis but also for the initiation of all mRNA translation through initiator tRNA(fMet) aminoacylation. This is Methionine--tRNA ligase (metG) from Lactococcus lactis subsp. lactis (strain IL1403) (Streptococcus lactis).